The sequence spans 184 residues: MSMKGKETMSEQNERIVMGKLGSTYGIRGWLKVFSYTDNAESIFDYSPWYLKLKGEWVEYKVESWKRHGQGYVCKLAGLDVREDAQLMTNFEIAIDPASLPELSEDEFYWRELFGMQVFTTKGYNLGEVTDLLETGSNDVLVIKANLKDAFGQKERLIPYLEEQVIKKVDREARRIEVDWDPGF.

Residues Ser104–Phe184 enclose the PRC barrel domain.

Belongs to the RimM family. As to quaternary structure, binds ribosomal protein uS19.

It is found in the cytoplasm. An accessory protein needed during the final step in the assembly of 30S ribosomal subunit, possibly for assembly of the head region. Essential for efficient processing of 16S rRNA. May be needed both before and after RbfA during the maturation of 16S rRNA. It has affinity for free ribosomal 30S subunits but not for 70S ribosomes. The chain is Ribosome maturation factor RimM from Vibrio atlanticus (strain LGP32) (Vibrio splendidus (strain Mel32)).